The following is a 209-amino-acid chain: Large ribosomal subunit protein bL25 (209 aa).

It belongs to the bacterial ribosomal protein bL25 family. CTC subfamily. Part of the 50S ribosomal subunit; part of the 5S rRNA/L5/L18/L25 subcomplex. Contacts the 5S rRNA. Binds to the 5S rRNA independently of L5 and L18.

In terms of biological role, this is one of the proteins that binds to the 5S RNA in the ribosome where it forms part of the central protuberance. The sequence is that of Large ribosomal subunit protein bL25 from Xanthomonas campestris pv. campestris (strain 8004).